A 489-amino-acid chain; its full sequence is Ribulose bisphosphate carboxylase large chain (489 aa).

Positions 128 and 178 each coordinate substrate. Lysine 180 serves as the catalytic Proton acceptor. Substrate is bound at residue lysine 182. The Mg(2+) site is built by lysine 206, aspartate 208, and glutamate 209. Lysine 206 carries the N6-carboxylysine modification. Histidine 298 acts as the Proton acceptor in catalysis. Substrate contacts are provided by arginine 299, histidine 331, and serine 383.

The protein belongs to the RuBisCO large chain family. Type I subfamily. As to quaternary structure, heterohexadecamer of 8 large chains and 8 small chains. Mg(2+) serves as cofactor.

It catalyses the reaction 2 (2R)-3-phosphoglycerate + 2 H(+) = D-ribulose 1,5-bisphosphate + CO2 + H2O. It carries out the reaction D-ribulose 1,5-bisphosphate + O2 = 2-phosphoglycolate + (2R)-3-phosphoglycerate + 2 H(+). In terms of biological role, ruBisCO catalyzes two reactions: the carboxylation of D-ribulose 1,5-bisphosphate, the primary event in carbon dioxide fixation, as well as the oxidative fragmentation of the pentose substrate. Both reactions occur simultaneously and in competition at the same active site. The chain is Ribulose bisphosphate carboxylase large chain from Nitrosospira sp. (strain 40KI).